An 858-amino-acid chain; its full sequence is Envelope glycoprotein gp160 (858 aa).

A signal peptide spans 1 to 19 (MMNQLLIAILLASACLVYC). The Extracellular portion of the chain corresponds to 20 to 679 (TQYVTVFYGV…LTSWVKYIQY (660 aa)). Asparagine 34 carries N-linked (GlcNAc...) asparagine; by host glycosylation. A disulfide bridge links cysteine 41 with cysteine 54. N-linked (GlcNAc...) asparagine; by host glycans are attached at residues asparagine 67, asparagine 76, asparagine 119, asparagine 120, asparagine 151, asparagine 166, asparagine 179, asparagine 192, asparagine 193, asparagine 196, asparagine 206, asparagine 238, asparagine 241, asparagine 248, asparagine 272, asparagine 278, asparagine 289, asparagine 300, asparagine 310, asparagine 367, asparagine 371, asparagine 400, asparagine 410, asparagine 447, asparagine 463, and asparagine 466. 5 cysteine pairs are disulfide-bonded: cysteine 98–cysteine 214, cysteine 105–cysteine 205, cysteine 110–cysteine 163, cysteine 227–cysteine 257, and cysteine 237–cysteine 249. Positions 110-162 (CSSTESSTGNNTTSKSTSTTTTTPTDQEQEISEDTPCARADNCSGLGEEETIN) are V1. The segment covering 111 to 134 (SSTESSTGNNTTSKSTSTTTTTPT) has biased composition (low complexity). The segment at 111–142 (SSTESSTGNNTTSKSTSTTTTTPTDQEQEISE) is disordered. The V2 stretch occupies residues 163 to 205 (CQFNMTGLERDKKKQYNETWYSKDVVCETNNSTNQTQCYMNHC). Residues 305–339 (CKRPGNKTVKQIMLMSGHVFHSHYQPINKRPRQAW) are V3. A disulfide bridge links cysteine 305 with cysteine 340. 2 cysteine pairs are disulfide-bonded: cysteine 392–cysteine 446 and cysteine 399–cysteine 419. The segment at 399 to 419 (CNMTWFLNWIENKTHRNYAPC) is V4. A V5 region spans residues 462–469 (NNQTNITF). The segment at 512 to 532 (GVFVLGFLGFLATAGSAMGAA) is fusion peptide. The immunosuppression stretch occupies residues 575–591 (LQARVTAIEKYLQDQAR). Asparagine 611, asparagine 620, and asparagine 636 each carry an N-linked (GlcNAc...) asparagine; by host glycan. Residues 624–645 (QEWEKQVRYLEANISKSLEQAQ) are a coiled coil. The interval 657–678 (KLNSWDIFGNWFDLTSWVKYIQ) is MPER; binding to GalCer. Residues 680–700 (GVLIIVAVIALRIVIYVVQML) form a helical membrane-spanning segment. Over 701-858 (SRLRKGYRPV…IRQGAEIALL (158 aa)) the chain is Cytoplasmic. Positions 707 to 710 (YRPV) match the YXXV motif; contains endocytosis signal motif. Cysteine 773 carries S-palmitoyl cysteine; by host lipidation. The Di-leucine internalization motif motif lies at 857–858 (LL).

As to quaternary structure, the mature envelope protein (Env) consists of a homotrimer of non-covalently associated gp120-gp41 heterodimers. The resulting complex protrudes from the virus surface as a spike. There seems to be as few as 10 spikes on the average virion. Interacts with human CD4, CCR5 and CXCR4, to form a P4HB/PDI-CD4-CXCR4-gp120 complex. Gp120 also interacts with the C-type lectins CD209/DC-SIGN and CLEC4M/DC-SIGNR (collectively referred to as DC-SIGN(R)). Gp120 and gp41 interact with GalCer. In terms of assembly, the mature envelope protein (Env) consists of a homotrimer of non-covalently associated gp120-gp41 heterodimers. The resulting complex protrudes from the virus surface as a spike. There seems to be as few as 10 spikes on the average virion. Post-translationally, specific enzymatic cleavages in vivo yield mature proteins. Envelope glycoproteins are synthesized as an inactive precursor that is heavily N-glycosylated and processed likely by host cell furin in the Golgi to yield the mature SU and TM proteins. The cleavage site between SU and TM requires the minimal sequence [KR]-X-[KR]-R. In terms of processing, palmitoylation of the transmembrane protein and of Env polyprotein (prior to its proteolytic cleavage) is essential for their association with host cell membrane lipid rafts. Palmitoylation is therefore required for envelope trafficking to classical lipid rafts, but not for viral replication.

It is found in the virion membrane. The protein resides in the host cell membrane. The protein localises to the host endosome membrane. Functionally, the surface protein gp120 (SU) attaches the virus to the host lymphoid cell by binding to the primary receptor CD4. This interaction induces a structural rearrangement creating a high affinity binding site for a chemokine coreceptor like CXCR4 and/or CCR5. This peculiar 2 stage receptor-interaction strategy allows gp120 to maintain the highly conserved coreceptor-binding site in a cryptic conformation, protected from neutralizing antibodies. Since CD4 also displays a binding site for the disulfide-isomerase P4HB/PDI, a P4HB/PDI-CD4-CXCR4-gp120 complex may form. In that complex, P4HB/PDI could reach and reduce gp120 disulfide bonds, causing major conformational changes in gp120. TXN, another PDI family member could also be involved in disulfide rearrangements in Env during fusion. These changes are transmitted to the transmembrane protein gp41 and are thought to activate its fusogenic potential by unmasking its fusion peptide. The surface protein gp120 is a ligand for CD209/DC-SIGN and CLEC4M/DC-SIGNR, which are respectively found on dendritic cells (DCs), and on endothelial cells of liver sinusoids and lymph node sinuses. These interactions allow capture of viral particles at mucosal surfaces by these cells and subsequent transmission to permissive cells. DCs are professional antigen presenting cells, critical for host immunity by inducing specific immune responses against a broad variety of pathogens. They act as sentinels in various tissues where they take up antigen, process it, and present it to T-cells following migration to lymphoid organs. HIV subverts the migration properties of dendritic cells to gain access to CD4+ T-cells in lymph nodes. Virus transmission to permissive T-cells occurs either in trans (without DCs infection, through viral capture and transmission), or in cis (following DCs productive infection, through the usual CD4-gp120 interaction), thereby inducing a robust infection. In trans infection, bound virions remain infectious over days and it is proposed that they are not degraded, but protected in non-lysosomal acidic organelles within the DCs close to the cell membrane thus contributing to the viral infectious potential during DCs' migration from the periphery to the lymphoid tissues. On arrival at lymphoid tissues, intact virions recycle back to DCs' cell surface allowing virus transmission to CD4+ T-cells. Virion capture also seems to lead to MHC-II-restricted viral antigen presentation, and probably to the activation of HIV-specific CD4+ cells. Its function is as follows. The transmembrane protein gp41 (TM) acts as a class I viral fusion protein. Under the current model, the protein has at least 3 conformational states: pre-fusion native state, pre-hairpin intermediate state, and post-fusion hairpin state. During fusion of viral and target intracellular membranes, the coiled coil regions (heptad repeats) assume a trimer-of-hairpins structure, positioning the fusion peptide in close proximity to the C-terminal region of the ectodomain. The formation of this structure appears to drive apposition and subsequent fusion of viral and target cell membranes. Complete fusion occurs in host cell endosomes and is dynamin-dependent, however some lipid transfer might occur at the plasma membrane. The virus undergoes clathrin-dependent internalization long before endosomal fusion, thus minimizing the surface exposure of conserved viral epitopes during fusion and reducing the efficacy of inhibitors targeting these epitopes. Membranes fusion leads to delivery of the nucleocapsid into the cytoplasm. In terms of biological role, the envelope glycoprotein gp160 precursor down-modulates cell surface CD4 antigen by interacting with it in the endoplasmic reticulum and blocking its transport to the cell surface. Functionally, the gp120-gp41 heterodimer seems to contribute to T-cell depletion during HIV-1 infection. The envelope glycoproteins expressed on the surface of infected cells induce apoptosis through an interaction with uninfected cells expressing the receptor (CD4) and the coreceptors CXCR4 or CCR5. This type of bystander killing may be obtained by at least three distinct mechanisms. First, the interaction between the 2 cells can induce cellular fusion followed by nuclear fusion within the syncytium. Syncytia are condemned to die from apoptosis. Second, the 2 interacting cells may not fuse entirely and simply exchange plasma membrane lipids, after a sort of hemifusion process, followed by rapid death. Third, it is possible that virus-infected cells, on the point of undergoing apoptosis, fuse with CD4-expressing cells, in which case apoptosis is rapidly transmitted from one cell to the other and thus occurs in a sort of contagious fashion. The gp120-gp41 heterodimer allows rapid transcytosis of the virus through CD4 negative cells such as simple epithelial monolayers of the intestinal, rectal and endocervical epithelial barriers. Both gp120 and gp41 specifically recognize glycosphingolipids galactosyl-ceramide (GalCer) or 3' sulfo-galactosyl-ceramide (GalS) present in the lipid rafts structures of epithelial cells. Binding to these alternative receptors allows the rapid transcytosis of the virus through the epithelial cells. This transcytotic vesicle-mediated transport of virions from the apical side to the basolateral side of the epithelial cells does not involve infection of the cells themselves. In Homo sapiens (Human), this protein is Envelope glycoprotein gp160 (env).